Here is a 146-residue protein sequence, read N- to C-terminus: Hemoglobin subunit beta-1 (146 aa).

The region spanning 2-146 is the Globin domain; the sequence is EWSSNERSTI…VISALSRQYF (145 aa). 2 residues coordinate heme b: H63 and H92.

Belongs to the globin family. As to quaternary structure, heterotetramer of two alpha chains and two beta chains. As to expression, red blood cells.

In terms of biological role, involved in oxygen transport from gills to the various peripheral tissues. This chain is Hemoglobin subunit beta-1 (hbb1), found in Muraena helena (Mediterranean moray).